The sequence spans 596 residues: MRTCYTGQVCRDHLGQTVTLYGWVNRRRDHGGVIFIDLRDRTGLAQIVFDPDNAEAFGTAERLRNEFCISITGLVRLRPEGTANAELASGEVEVLCQQVEILNASVTPPFQLDDDNLSETTRLTHRVLDLRRPQMQHNLMLRYRVSIEVRKYLDQLGFIDIETPMLTKSTPEGARDYLVPSRVNAGYFFALPQSPQLFKQMLMVSGFDRYYQITKCFRDEDLRADRQPEFTQIDCETSFLNEVEIREIFEGMIRHVFKVVQDVDLPTPFPIMSWTEAMQRYGSDKPDLRVNLEFTDMTDVMRDVDFKVFASAATTAGSRVVALRVQGGGEMSRSEIDAYTQFVGIYGAKGLAYIKVNDVAKGREGLQSPIVKNLHDAALAELVKRTGAQNGDIIFFGADRAKVVNDAIGALRVKIGHSEFGKKAGLFSGGWKPLWVVDFPMFEYDEEENRYTAAHHPFTSPKDGHEDFLESDPGKAVAKAYDMVLNGWEIGGGSVRIHREEVQSKVFRALKIDAEEAREKFGFLLDALQYGAPPHGGIAFGLDRIITMMAGAESIRDVIAFPKTQRAQCLLTGAPSEVDEKQLRELHIRLRNVEVK.

E172 is a binding site for L-aspartate. Positions 196 to 199 (QLFK) are aspartate. Position 218 (R218) interacts with L-aspartate. ATP-binding positions include 218-220 (RDE) and Q227. An L-aspartate-binding site is contributed by H455. E489 lines the ATP pocket. R496 is an L-aspartate binding site. 541–544 (GLDR) provides a ligand contact to ATP.

Belongs to the class-II aminoacyl-tRNA synthetase family. Type 1 subfamily. Homodimer.

It is found in the cytoplasm. The enzyme catalyses tRNA(Asx) + L-aspartate + ATP = L-aspartyl-tRNA(Asx) + AMP + diphosphate. Its function is as follows. Aspartyl-tRNA synthetase with relaxed tRNA specificity since it is able to aspartylate not only its cognate tRNA(Asp) but also tRNA(Asn). Reaction proceeds in two steps: L-aspartate is first activated by ATP to form Asp-AMP and then transferred to the acceptor end of tRNA(Asp/Asn). This chain is Aspartate--tRNA(Asp/Asn) ligase, found in Bordetella bronchiseptica (strain ATCC BAA-588 / NCTC 13252 / RB50) (Alcaligenes bronchisepticus).